The following is an 87-amino-acid chain: Small ribosomal subunit protein uS17 (87 aa).

It belongs to the universal ribosomal protein uS17 family. Part of the 30S ribosomal subunit.

Its function is as follows. One of the primary rRNA binding proteins, it binds specifically to the 5'-end of 16S ribosomal RNA. The polypeptide is Small ribosomal subunit protein uS17 (Anoxybacillus flavithermus (strain DSM 21510 / WK1)).